The primary structure comprises 271 residues: Formamidopyrimidine-DNA glycosylase (271 aa).

Pro-2 acts as the Schiff-base intermediate with DNA in catalysis. Glu-3 functions as the Proton donor in the catalytic mechanism. The Proton donor; for beta-elimination activity role is filled by Lys-56. Residues His-89, Arg-107, and Arg-151 each coordinate DNA. Residues 236-270 (MVYDRAGLPCRVCAAPIKSIRQGQRSSFYCATCQK) form an FPG-type zinc finger. The active-site Proton donor; for delta-elimination activity is the Arg-260.

Belongs to the FPG family. Monomer. Zn(2+) is required as a cofactor.

It catalyses the reaction Hydrolysis of DNA containing ring-opened 7-methylguanine residues, releasing 2,6-diamino-4-hydroxy-5-(N-methyl)formamidopyrimidine.. It carries out the reaction 2'-deoxyribonucleotide-(2'-deoxyribose 5'-phosphate)-2'-deoxyribonucleotide-DNA = a 3'-end 2'-deoxyribonucleotide-(2,3-dehydro-2,3-deoxyribose 5'-phosphate)-DNA + a 5'-end 5'-phospho-2'-deoxyribonucleoside-DNA + H(+). In terms of biological role, involved in base excision repair of DNA damaged by oxidation or by mutagenic agents. Acts as a DNA glycosylase that recognizes and removes damaged bases. Has a preference for oxidized purines, such as 7,8-dihydro-8-oxoguanine (8-oxoG). Has AP (apurinic/apyrimidinic) lyase activity and introduces nicks in the DNA strand. Cleaves the DNA backbone by beta-delta elimination to generate a single-strand break at the site of the removed base with both 3'- and 5'-phosphates. The polypeptide is Formamidopyrimidine-DNA glycosylase (Polaromonas naphthalenivorans (strain CJ2)).